Consider the following 310-residue polypeptide: Homoserine kinase (310 aa).

91-101 (PIGSGLGSSAC) contacts ATP.

The protein belongs to the GHMP kinase family. Homoserine kinase subfamily.

The protein localises to the cytoplasm. It carries out the reaction L-homoserine + ATP = O-phospho-L-homoserine + ADP + H(+). It functions in the pathway amino-acid biosynthesis; L-threonine biosynthesis; L-threonine from L-aspartate: step 4/5. Its function is as follows. Catalyzes the ATP-dependent phosphorylation of L-homoserine to L-homoserine phosphate. The chain is Homoserine kinase from Shigella flexneri serotype 5b (strain 8401).